A 279-amino-acid polypeptide reads, in one-letter code: Pantothenate synthetase (279 aa).

An ATP-binding site is contributed by 26-33; sequence MGNLHDGH. The active-site Proton donor is His33. Gln57 contributes to the (R)-pantoate binding site. Gln57 provides a ligand contact to beta-alanine. 144-147 serves as a coordination point for ATP; that stretch reads GKKD. Gln150 lines the (R)-pantoate pocket. ATP contacts are provided by residues Val173 and 181–184; that span reads LSSR.

This sequence belongs to the pantothenate synthetase family. In terms of assembly, homodimer.

It is found in the cytoplasm. The catalysed reaction is (R)-pantoate + beta-alanine + ATP = (R)-pantothenate + AMP + diphosphate + H(+). It participates in cofactor biosynthesis; (R)-pantothenate biosynthesis; (R)-pantothenate from (R)-pantoate and beta-alanine: step 1/1. Functionally, catalyzes the condensation of pantoate with beta-alanine in an ATP-dependent reaction via a pantoyl-adenylate intermediate. This chain is Pantothenate synthetase, found in Burkholderia mallei (strain NCTC 10229).